The sequence spans 1223 residues: Kinesin-like protein costa (1223 aa).

One can recognise a Kinesin motor domain in the interval 4 to 394 (PIQVAVRICP…LQFAFKVQCV (391 aa)). The interval 13–90 (PYTEPSENRK…LPTDSNGNEN (78 aa)) is disordered. The segment covering 39 to 62 (AKAESFSDSEDNKNDASNRQRPEE) has biased composition (basic and acidic residues). Residue 178–185 (GQRGQGKT) coordinates ATP. Disordered stretches follow at residues 494-528 (RSQK…ESQR), 560-604 (KHPK…SIQP), and 625-646 (TAQP…ESSA). The span at 569-593 (QERDKESKLDAPPEKDKEKIEERKT) shows a compositional bias: basic and acidic residues. 3 coiled-coil regions span residues 658–743 (AAAN…QGRE), 773–825 (ESGQ…GASG), and 982–1015 (NKVI…ERVL). A disordered region spans residues 774–799 (SGQKLKKLQQSMAESRKQQEELEKKI). A compositionally biased stretch (basic and acidic residues) spans 787 to 799 (ESRKQQEELEKKI). The span at 1162 to 1178 (TTTATATTTTTTTTTTT) shows a compositional bias: low complexity. Residues 1162-1188 (TTTATATTTTTTTTTTTGGKGKERGLP) are disordered.

Belongs to the TRAFAC class myosin-kinesin ATPase superfamily. Kinesin family. KIF27 subfamily. As to quaternary structure, homodimer (Potential). Binds microtubules. Interacts with ci, smo, sgg, CkIalpha and protein kinase A catalytic subunit.

The protein localises to the cytoplasm. The protein resides in the cytoskeleton. Its function is as follows. Regulates cubitus interruptus (ci) processing by recruiting multiple kinases to promote its efficient phosphorylation. Scaffolds multiple kinases and ci into proximity to promote its hyperphosphorylation, which then targets it for SCFSlimb/proteasome-mediated processing to generate its repressor form. Hh signaling inhibits ci phosphorylation by interfering with the cos-ci-kinases complex formation. The protein is Kinesin-like protein costa (cos) of Drosophila pseudoobscura pseudoobscura (Fruit fly).